The chain runs to 98 residues: Large ribosomal subunit protein bL25 (98 aa).

Residues 1–23 (MANFVLNAQARAEDKQGKGASRR) form a disordered region.

The protein belongs to the bacterial ribosomal protein bL25 family. As to quaternary structure, part of the 50S ribosomal subunit; part of the 5S rRNA/L5/L18/L25 subcomplex. Contacts the 5S rRNA. Binds to the 5S rRNA independently of L5 and L18.

Its function is as follows. This is one of the proteins that binds to the 5S RNA in the ribosome where it forms part of the central protuberance. This is Large ribosomal subunit protein bL25 from Acinetobacter baumannii (strain AB307-0294).